Here is a 162-residue protein sequence, read N- to C-terminus: MAPVAVGDTLPDGQLGWFDGEDKLQQVSVHGLAAGKKVVLFGVPGAFTPTCSNQHVPGFINQAEQLKAKGVDDILLVSVNDPFVMKAWAKSYPENKHVKFLADGLGTYTKALGLELDLSEKGLGIRSRRFALLADNLKVTVANIEEGGQFTISGAEEILKAL.

Residues 4–162 (VAVGDTLPDG…SGAEEILKAL (159 aa)) enclose the Thioredoxin domain. Catalysis depends on Cys-51, which acts as the Cysteine sulfenic acid (-SOH) intermediate.

The protein belongs to the peroxiredoxin family. Prx5 subfamily. As to quaternary structure, monomer.

It is found in the cytoplasm. The catalysed reaction is [glutaredoxin]-dithiol + a hydroperoxide = [glutaredoxin]-disulfide + an alcohol + H2O. Functionally, reduces hydrogen peroxide and alkyl hydroperoxides with reducing equivalents provided through the thioredoxin or glutaredoxin system. May be involved in intracellular redox signaling. Thiol-specific peroxidase that catalyzes the reduction of hydrogen peroxide and organic hydroperoxides to water and alcohols, respectively. Plays a role in cell protection against oxidative stress by detoxifying peroxides. This chain is Peroxiredoxin-2C (PRXIIC), found in Oryza sativa subsp. japonica (Rice).